A 433-amino-acid polypeptide reads, in one-letter code: Gamma-glutamyl phosphate reductase (433 aa).

This sequence belongs to the gamma-glutamyl phosphate reductase family.

Its subcellular location is the cytoplasm. The catalysed reaction is L-glutamate 5-semialdehyde + phosphate + NADP(+) = L-glutamyl 5-phosphate + NADPH + H(+). It participates in amino-acid biosynthesis; L-proline biosynthesis; L-glutamate 5-semialdehyde from L-glutamate: step 2/2. Its function is as follows. Catalyzes the NADPH-dependent reduction of L-glutamate 5-phosphate into L-glutamate 5-semialdehyde and phosphate. The product spontaneously undergoes cyclization to form 1-pyrroline-5-carboxylate. This chain is Gamma-glutamyl phosphate reductase, found in Cyanothece sp. (strain PCC 7425 / ATCC 29141).